Reading from the N-terminus, the 347-residue chain is NADH-ubiquinone oxidoreductase chain 2 (347 aa).

Transmembrane regions (helical) follow at residues 1 to 21 (MNPL…AIVM), 25 to 45 (HWLT…PMLM), 59 to 79 (YFLT…MNLT), 96 to 116 (IIMT…FWVP), 127 to 147 (CLIL…MISP), 149 to 169 (INLN…GWGG), 178 to 198 (IMAY…AYNP), 200 to 220 (MTML…MLLI), 247 to 267 (IMLS…WMII), 276 to 296 (IIMP…YMRL), and 325 to 345 (LLSP…MMSL).

It belongs to the complex I subunit 2 family. As to quaternary structure, core subunit of respiratory chain NADH dehydrogenase (Complex I) which is composed of 45 different subunits. Interacts with TMEM242.

It is found in the mitochondrion inner membrane. It carries out the reaction a ubiquinone + NADH + 5 H(+)(in) = a ubiquinol + NAD(+) + 4 H(+)(out). Functionally, core subunit of the mitochondrial membrane respiratory chain NADH dehydrogenase (Complex I) which catalyzes electron transfer from NADH through the respiratory chain, using ubiquinone as an electron acceptor. Essential for the catalytic activity and assembly of complex I. In Natalus stramineus (Mexican funnel-eared bat), this protein is NADH-ubiquinone oxidoreductase chain 2.